We begin with the raw amino-acid sequence, 138 residues long: Acidic phospholipase A2 1 (138 aa).

The N-terminal stretch at 1–16 is a signal peptide; it reads MRTLWIMAVLLVGVDG. Intrachain disulfides connect Cys-42/Cys-131, Cys-44/Cys-60, Cys-59/Cys-110, Cys-65/Cys-138, Cys-66/Cys-103, Cys-73/Cys-97, and Cys-91/Cys-101. Residues Tyr-43, Gly-45, and Gly-47 each coordinate Ca(2+). His-63 is a catalytic residue. Residue Asp-64 participates in Ca(2+) binding. Asp-104 is a catalytic residue.

It belongs to the phospholipase A2 family. Group II subfamily. D49 sub-subfamily. As to quaternary structure, homodimer. Ca(2+) serves as cofactor. Expressed by the venom gland.

The protein localises to the secreted. The catalysed reaction is a 1,2-diacyl-sn-glycero-3-phosphocholine + H2O = a 1-acyl-sn-glycero-3-phosphocholine + a fatty acid + H(+). Its function is as follows. Snake venom phospholipase A2 (PLA2) that is highly lipolytic and myolytic. PLA2 catalyzes the calcium-dependent hydrolysis of the 2-acyl groups in 3-sn-phosphoglycerides. This is Acidic phospholipase A2 1 from Protobothrops flavoviridis (Habu).